We begin with the raw amino-acid sequence, 291 residues long: tRNA dimethylallyltransferase (291 aa).

An ATP-binding site is contributed by Gly17–Ser24. Residue Thr19–Ser24 participates in substrate binding.

It belongs to the IPP transferase family. As to quaternary structure, monomer. Requires Mg(2+) as cofactor.

It carries out the reaction adenosine(37) in tRNA + dimethylallyl diphosphate = N(6)-dimethylallyladenosine(37) in tRNA + diphosphate. Functionally, catalyzes the transfer of a dimethylallyl group onto the adenine at position 37 in tRNAs that read codons beginning with uridine, leading to the formation of N6-(dimethylallyl)adenosine (i(6)A). This Cereibacter sphaeroides (strain ATCC 17025 / ATH 2.4.3) (Rhodobacter sphaeroides) protein is tRNA dimethylallyltransferase.